The sequence spans 579 residues: Probable methyl-accepting chemotaxis protein BT9727_0355 (579 aa).

Residues 1–13 (MKKYWHKLSFLQK) are Cytoplasmic-facing. A helical transmembrane segment spans residues 14–34 (NVLLTVLVILTLVGTMGALSF). Over 35–198 (NMFQNSMMSI…ASIVPSTKEK (164 aa)) the chain is Extracellular. Residues 199 to 219 (FIIQGLMFICISVLIATVIQF) form a helical membrane-spanning segment. At 220 to 579 (LIVRNALAPL…LQELIGEFKS (360 aa)) the chain is on the cytoplasmic side. Residues 223–274 (RNALAPLRDLREGLRRVGEGDLNIKLEERSDDIGIINSYFNNTIEKFKGIID) enclose the HAMP domain. A Glutamate methyl ester (Glu) modification is found at Glu289. The region spanning 293 to 529 (STKENSMAVQ…NIVRVVNELS (237 aa)) is the Methyl-accepting transducer domain. At Glu548 the chain carries Glutamate methyl ester (Glu).

Belongs to the methyl-accepting chemotaxis (MCP) protein family.

Its subcellular location is the cell membrane. Its function is as follows. Chemotactic-signal transducers respond to changes in the concentration of attractants and repellents in the environment, transduce a signal from the outside to the inside of the cell, and facilitate sensory adaptation through the variation of the level of methylation. The chain is Probable methyl-accepting chemotaxis protein BT9727_0355 from Bacillus thuringiensis subsp. konkukian (strain 97-27).